The following is a 123-amino-acid chain: MIQMQTNLDVADNSGAKRVQCIKVLGGSKRRTATVGDVIVVSVKEAAPRGRVKKGDVHRAVIVRTAKDIHRADGSVIRFDGNAAVLINKTSGEPIGTRIFGPVVRELRARNHMKIISLAPEVL.

It belongs to the universal ribosomal protein uL14 family. In terms of assembly, part of the 50S ribosomal subunit. Forms a cluster with proteins L3 and L19. In the 70S ribosome, L14 and L19 interact and together make contacts with the 16S rRNA in bridges B5 and B8.

Binds to 23S rRNA. Forms part of two intersubunit bridges in the 70S ribosome. This is Large ribosomal subunit protein uL14 from Zymomonas mobilis subsp. mobilis (strain ATCC 31821 / ZM4 / CP4).